The primary structure comprises 409 residues: Tyrosine--tRNA ligase (409 aa).

The short motif at 54–63 is the 'HIGH' region element; the sequence is PTAPDIHLGH. Positions 238-242 match the 'KMSKS' region motif; the sequence is KMSKS. K241 contacts ATP. The 61-residue stretch at 347–407 folds into the S4 RNA-binding domain; that stretch reads QGILRILREA…GKRKFARVKL (61 aa).

Belongs to the class-I aminoacyl-tRNA synthetase family. TyrS type 2 subfamily. As to quaternary structure, homodimer.

It localises to the cytoplasm. It catalyses the reaction tRNA(Tyr) + L-tyrosine + ATP = L-tyrosyl-tRNA(Tyr) + AMP + diphosphate + H(+). In terms of biological role, catalyzes the attachment of tyrosine to tRNA(Tyr) in a two-step reaction: tyrosine is first activated by ATP to form Tyr-AMP and then transferred to the acceptor end of tRNA(Tyr). The protein is Tyrosine--tRNA ligase of Bordetella pertussis (strain Tohama I / ATCC BAA-589 / NCTC 13251).